Consider the following 248-residue polypeptide: Amphiregulin (248 aa).

Positions Met1–Ala26 are cleaved as a signal peptide. Residues Leu27–Gln99 constitute a propeptide that is removed on maturation. Disordered regions lie at residues Leu29–Gly48, Val57–Ser77, and Val100–Lys136. Over residues Ser58 to Ser70 the composition is skewed to polar residues. The span at Val100–Lys116 shows a compositional bias: basic and acidic residues. Asn106 carries an N-linked (GlcNAc...) asparagine glycan. The span at Pro117–Lys136 shows a compositional bias: basic residues. Positions Lys135 to Gly175 constitute an EGF-like domain. Disulfide bonds link Cys139–Cys152, Cys147–Cys163, and Cys165–Cys174. A helical membrane pass occupies residues Ile192 to Ile215. N-linked (GlcNAc...) asparagine glycosylation is present at Asn241.

Belongs to the amphiregulin family. As to quaternary structure, the immature precursor interacts with CNIH.

It localises to the membrane. Functionally, ligand of the EGF receptor/EGFR. Autocrine growth factor as well as a mitogen for a broad range of target cells including astrocytes, Schwann cells and fibroblasts. The sequence is that of Amphiregulin (Areg) from Mus musculus (Mouse).